The following is a 262-amino-acid chain: Transcription factor bHLH81 (262 aa).

The disordered stretch occupies residues 1 to 29 (MQPTSVGSSGGGDDGGGRGGGGGLSRSGL). Gly residues predominate over residues 8–25 (SSGGGDDGGGRGGGGGLS). Positions 190–240 (CATHPRSIAERVRRTRISDRIRKLQELVPNMDKQTNTADMLEEAVEYVKVL) constitute a bHLH domain.

Homodimer. As to expression, expressed in flowers.

Its subcellular location is the nucleus. The sequence is that of Transcription factor bHLH81 (BHLH81) from Arabidopsis thaliana (Mouse-ear cress).